The chain runs to 227 residues: Cytochrome c oxidase subunit 2 (227 aa).

The Mitochondrial intermembrane portion of the chain corresponds to 1-14 (MAYPFQLGLQDATS). Residues 15-45 (PIMEELLHFHDHTLMIVFLISSLVLYIISLM) traverse the membrane as a helical segment. The Mitochondrial matrix segment spans residues 46–59 (LTTKLTHTSTMDAQ). The chain crosses the membrane as a helical span at residues 60–87 (EVETVWTILPAIILVLIALPSLRILYMM). Over 88–227 (DEINNPSLTV…YFETWSALMV (140 aa)) the chain is Mitochondrial intermembrane. Positions 161, 196, 198, 200, 204, and 207 each coordinate Cu cation. Glutamate 198 contacts Mg(2+). Tyrosine 218 is subject to Phosphotyrosine.

The protein belongs to the cytochrome c oxidase subunit 2 family. Component of the cytochrome c oxidase (complex IV, CIV), a multisubunit enzyme composed of 14 subunits. The complex is composed of a catalytic core of 3 subunits MT-CO1, MT-CO2 and MT-CO3, encoded in the mitochondrial DNA, and 11 supernumerary subunits COX4I, COX5A, COX5B, COX6A, COX6B, COX6C, COX7A, COX7B, COX7C, COX8 and NDUFA4, which are encoded in the nuclear genome. The complex exists as a monomer or a dimer and forms supercomplexes (SCs) in the inner mitochondrial membrane with NADH-ubiquinone oxidoreductase (complex I, CI) and ubiquinol-cytochrome c oxidoreductase (cytochrome b-c1 complex, complex III, CIII), resulting in different assemblies (supercomplex SCI(1)III(2)IV(1) and megacomplex MCI(2)III(2)IV(2)). Found in a complex with TMEM177, COA6, COX18, COX20, SCO1 and SCO2. Interacts with TMEM177 in a COX20-dependent manner. Interacts with COX20. Interacts with COX16. Cu cation serves as cofactor.

It is found in the mitochondrion inner membrane. It catalyses the reaction 4 Fe(II)-[cytochrome c] + O2 + 8 H(+)(in) = 4 Fe(III)-[cytochrome c] + 2 H2O + 4 H(+)(out). In terms of biological role, component of the cytochrome c oxidase, the last enzyme in the mitochondrial electron transport chain which drives oxidative phosphorylation. The respiratory chain contains 3 multisubunit complexes succinate dehydrogenase (complex II, CII), ubiquinol-cytochrome c oxidoreductase (cytochrome b-c1 complex, complex III, CIII) and cytochrome c oxidase (complex IV, CIV), that cooperate to transfer electrons derived from NADH and succinate to molecular oxygen, creating an electrochemical gradient over the inner membrane that drives transmembrane transport and the ATP synthase. Cytochrome c oxidase is the component of the respiratory chain that catalyzes the reduction of oxygen to water. Electrons originating from reduced cytochrome c in the intermembrane space (IMS) are transferred via the dinuclear copper A center (CU(A)) of subunit 2 and heme A of subunit 1 to the active site in subunit 1, a binuclear center (BNC) formed by heme A3 and copper B (CU(B)). The BNC reduces molecular oxygen to 2 water molecules using 4 electrons from cytochrome c in the IMS and 4 protons from the mitochondrial matrix. In Cerdocyon thous (Crab-eating fox), this protein is Cytochrome c oxidase subunit 2 (MT-CO2).